The primary structure comprises 218 residues: uncharacterized protein (218 aa).

The next 5 helical transmembrane spans lie at 19–39 (VFGFSEFSIIGFITAVIFTII), 92–112 (FDYALFLTLVGIANIGIVSAV), 124–144 (YGLIAMIATLPLFGSAGMILA), 161–181 (LLFEKIIFAAGMAGETGIAPF), and 196–216 (YILMIHLSSLLLIVRTVEILL).

Its subcellular location is the cell membrane. This is an uncharacterized protein from Methanocaldococcus jannaschii (strain ATCC 43067 / DSM 2661 / JAL-1 / JCM 10045 / NBRC 100440) (Methanococcus jannaschii).